The primary structure comprises 389 residues: tRNA-specific 2-thiouridylase MnmA (389 aa).

ATP is bound by residues 30–37 (GLSGGVDS) and L56. The active-site Nucleophile is the C117. C117 and C216 are disulfide-bonded. Residue G142 participates in ATP binding. An interaction with tRNA region spans residues 166 to 168 (KDQ). The active-site Cysteine persulfide intermediate is C216. The interval 321 to 322 (RY) is interaction with tRNA.

The protein belongs to the MnmA/TRMU family.

It localises to the cytoplasm. It carries out the reaction S-sulfanyl-L-cysteinyl-[protein] + uridine(34) in tRNA + AH2 + ATP = 2-thiouridine(34) in tRNA + L-cysteinyl-[protein] + A + AMP + diphosphate + H(+). In terms of biological role, catalyzes the 2-thiolation of uridine at the wobble position (U34) of tRNA, leading to the formation of s(2)U34. In Synechococcus sp. (strain CC9902), this protein is tRNA-specific 2-thiouridylase MnmA.